The sequence spans 471 residues: Glutamate--tRNA ligase (471 aa).

Residues 10–20 carry the 'HIGH' region motif; that stretch reads PSPTGFLHIGG. Positions 117-137 are disordered; sequence GRPPRYDGRWRDRPASERPTD. The 'KMSKS' region motif lies at 239–243; the sequence is KLSKR. Lysine 242 is an ATP binding site.

This sequence belongs to the class-I aminoacyl-tRNA synthetase family. Glutamate--tRNA ligase type 1 subfamily. Monomer.

The protein resides in the cytoplasm. The enzyme catalyses tRNA(Glu) + L-glutamate + ATP = L-glutamyl-tRNA(Glu) + AMP + diphosphate. Catalyzes the attachment of glutamate to tRNA(Glu) in a two-step reaction: glutamate is first activated by ATP to form Glu-AMP and then transferred to the acceptor end of tRNA(Glu). In Azorhizobium caulinodans (strain ATCC 43989 / DSM 5975 / JCM 20966 / LMG 6465 / NBRC 14845 / NCIMB 13405 / ORS 571), this protein is Glutamate--tRNA ligase.